A 208-amino-acid chain; its full sequence is Dual specificity protein phosphatase 22-A (208 aa).

In terms of domain architecture, Tyrosine-protein phosphatase spans 4–144 (GMNKVIDGLY…LQEFQMKQVS (141 aa)). C88 (phosphocysteine intermediate) is an active-site residue.

Belongs to the protein-tyrosine phosphatase family. Non-receptor class dual specificity subfamily.

Its subcellular location is the cytoplasm. The protein localises to the nucleus. The catalysed reaction is O-phospho-L-tyrosyl-[protein] + H2O = L-tyrosyl-[protein] + phosphate. It catalyses the reaction O-phospho-L-seryl-[protein] + H2O = L-seryl-[protein] + phosphate. The enzyme catalyses O-phospho-L-threonyl-[protein] + H2O = L-threonyl-[protein] + phosphate. Activates the Jnk signaling pathway. Dephosphorylates and deactivates p38 and stress-activated protein kinase/c-Jun N-terminal kinase (SAPK/JNK). This is Dual specificity protein phosphatase 22-A from Danio rerio (Zebrafish).